We begin with the raw amino-acid sequence, 171 residues long: Large ribosomal subunit protein uL10 (171 aa).

The protein belongs to the universal ribosomal protein uL10 family. In terms of assembly, part of the ribosomal stalk of the 50S ribosomal subunit. The N-terminus interacts with L11 and the large rRNA to form the base of the stalk. The C-terminus forms an elongated spine to which L12 dimers bind in a sequential fashion forming a multimeric L10(L12)X complex.

In terms of biological role, forms part of the ribosomal stalk, playing a central role in the interaction of the ribosome with GTP-bound translation factors. The sequence is that of Large ribosomal subunit protein uL10 (rplJ) from Lactococcus lactis subsp. lactis (strain IL1403) (Streptococcus lactis).